Consider the following 393-residue polypeptide: MSRIGTPLSPGATRVLLCGSGELGKEVVIELQRFGVEVIAVDRYADAPAMQVAHRSHVINMLDGAALRALIEQERPHYIVPEIEAIATATLVELESEGFTVIPSARAANLTMNREGIRRLAAEELGLPTSPYRFADSFEEYRAAAEALGFPCVVKPIMSSSGKGQSLLKGPEQLQAAWDYAQEGGRAGKGRVIVEGFIDFDYEITLLTVRHAGETTFCAPIGHRQEKGDYQESWQPQAMSTTAQAESERIARTVTEALGGRGLFGVELFVKGDQVWFSEVSPRPHDTGLVTLISQDLSEFALHARAILGLPIPAIRQFGPAASAVILVEGQSREVGFANLGQALAEPDTALRLFGKPEVAGQRRMGVALARDVSVETARQKATRAAQAVEVQL.

N(1)-(5-phospho-beta-D-ribosyl)glycinamide contacts are provided by residues 22 to 23 and glutamate 82; that span reads EL. ATP is bound by residues arginine 114, lysine 155, 160 to 165, 195 to 198, and glutamate 203; these read SSGKGQ and EGFI. The 190-residue stretch at 119 to 308 folds into the ATP-grasp domain; sequence RLAAEELGLP…EFALHARAIL (190 aa). 2 residues coordinate Mg(2+): glutamate 267 and glutamate 279. N(1)-(5-phospho-beta-D-ribosyl)glycinamide-binding positions include aspartate 286, lysine 356, and 363–364; that span reads RR.

Belongs to the PurK/PurT family. Homodimer.

The enzyme catalyses N(1)-(5-phospho-beta-D-ribosyl)glycinamide + formate + ATP = N(2)-formyl-N(1)-(5-phospho-beta-D-ribosyl)glycinamide + ADP + phosphate + H(+). It participates in purine metabolism; IMP biosynthesis via de novo pathway; N(2)-formyl-N(1)-(5-phospho-D-ribosyl)glycinamide from N(1)-(5-phospho-D-ribosyl)glycinamide (formate route): step 1/1. Involved in the de novo purine biosynthesis. Catalyzes the transfer of formate to 5-phospho-ribosyl-glycinamide (GAR), producing 5-phospho-ribosyl-N-formylglycinamide (FGAR). Formate is provided by PurU via hydrolysis of 10-formyl-tetrahydrofolate. The sequence is that of Formate-dependent phosphoribosylglycinamide formyltransferase from Azotobacter vinelandii (strain DJ / ATCC BAA-1303).